The following is a 209-amino-acid chain: Uracil phosphoribosyltransferase (209 aa).

Residues R79, R104, and 131–139 (DPMLATGGS) each bind 5-phospho-alpha-D-ribose 1-diphosphate. Residues V194 and 199–201 (GDA) contribute to the uracil site. D200 is a 5-phospho-alpha-D-ribose 1-diphosphate binding site.

It belongs to the UPRTase family. Requires Mg(2+) as cofactor.

It carries out the reaction UMP + diphosphate = 5-phospho-alpha-D-ribose 1-diphosphate + uracil. It functions in the pathway pyrimidine metabolism; UMP biosynthesis via salvage pathway; UMP from uracil: step 1/1. With respect to regulation, allosterically activated by GTP. Catalyzes the conversion of uracil and 5-phospho-alpha-D-ribose 1-diphosphate (PRPP) to UMP and diphosphate. This is Uracil phosphoribosyltransferase from Bacillus mycoides (strain KBAB4) (Bacillus weihenstephanensis).